A 454-amino-acid polypeptide reads, in one-letter code: Glutamate--tRNA ligase (454 aa).

The 'HIGH' region motif lies at 7 to 17; that stretch reads PSPTGCLHIGG. Zn(2+) is bound by residues Cys-96, Cys-98, Cys-123, and Asp-125. The short motif at 230 to 234 is the 'KMSKS' region element; it reads RLSKR. Lys-233 contributes to the ATP binding site.

Belongs to the class-I aminoacyl-tRNA synthetase family. Glutamate--tRNA ligase type 1 subfamily. Monomer. Zn(2+) is required as a cofactor.

Its subcellular location is the cytoplasm. The catalysed reaction is tRNA(Glu) + L-glutamate + ATP = L-glutamyl-tRNA(Glu) + AMP + diphosphate. Catalyzes the attachment of glutamate to tRNA(Glu) in a two-step reaction: glutamate is first activated by ATP to form Glu-AMP and then transferred to the acceptor end of tRNA(Glu). The sequence is that of Glutamate--tRNA ligase from Ruthia magnifica subsp. Calyptogena magnifica.